A 394-amino-acid chain; its full sequence is THAP domain-containing protein 5 (394 aa).

The THAP-type zinc finger occupies 1–84 (MPRYCAAICC…LKQTAIPTIF (84 aa)). The interval 86 to 109 (LPEDNQEKDPSKKKSQKKKLKSEK) is disordered. The HCFC1-binding motif (HBM) motif lies at 320–323 (EHSY). Positions 347–381 (LELQEQQTLGRLKSLEALIRQLKQENWLSEENVKI) form a coiled coil.

Interacts with HTRA2; under apoptotic conditions. Interacts with ABRAXAS2. Cleaved by HTRA2 during apoptosis.

Its subcellular location is the nucleus. In terms of biological role, has sequence-specific DNA-binding activity and can function as transcriptional repressor (in vitro). May be a regulator of cell cycle: THAP5 overexpression in human cell lines causes cell cycle arrest at G2/M phase. The polypeptide is THAP domain-containing protein 5 (THAP5) (Bos taurus (Bovine)).